A 278-amino-acid chain; its full sequence is Ribonuclease HII (278 aa).

Positions 71–259 (WPVAGCDEAG…VAAAWDKHAP (189 aa)) constitute an RNase H type-2 domain. The a divalent metal cation site is built by D77, E78, and D168.

This sequence belongs to the RNase HII family. It depends on Mn(2+) as a cofactor. Mg(2+) is required as a cofactor.

It is found in the cytoplasm. The enzyme catalyses Endonucleolytic cleavage to 5'-phosphomonoester.. In terms of biological role, endonuclease that specifically degrades the RNA of RNA-DNA hybrids. This Rhodopseudomonas palustris (strain BisA53) protein is Ribonuclease HII.